We begin with the raw amino-acid sequence, 617 residues long: D-glucuronyl C5-epimerase (617 aa).

Residues 1-11 (MRCLAARVNYK) lie on the Cytoplasmic side of the membrane. A helical; Signal-anchor for type II membrane protein transmembrane segment spans residues 12–28 (TLIIICALFTLVTVLLW). The Lumenal segment spans residues 29-617 (NKCSSDKAIQ…YLKGSRAKHN (589 aa)). Residues tyrosine 179, 184 to 186 (RDR), glutamine 201, tyrosine 209, glutamine 212, and glutamine 215 contribute to the substrate site. Threonine 237, glutamate 239, threonine 268, asparagine 269, and aspartate 392 together coordinate Ca(2+). Substrate-binding positions include 429–432 (KLGE), 499–500 (EY), asparagine 510, tyrosine 514, tyrosine 560, arginine 563, and 572–581 (NLARWDYHTT).

The protein belongs to the D-glucuronyl C5-epimerase family. Homodimer. Interacts with HS2ST1.

Its subcellular location is the golgi apparatus membrane. The catalysed reaction is [heparosan-N-sulfate](n) = [heparan-N-sulfate](n). It participates in glycan metabolism; heparan sulfate biosynthesis. The protein operates within glycan metabolism; heparin biosynthesis. Its function is as follows. Converts D-glucuronic acid residues adjacent to N-sulfate sugar residues to L-iduronic acid residues, both in maturing heparan sulfate (HS) and heparin chains. This is important for further modifications that determine the specificity of interactions between these glycosaminoglycans and proteins. The chain is D-glucuronyl C5-epimerase (GLCE) from Bos taurus (Bovine).